The sequence spans 387 residues: MPPRVVRLPSLTGLRWFAALAVFACHIAQQQFFADQQVGTALLHITTLGSIAVSVFFLLSGFVLAWSARDKDSVTTFWRRRFAKIYPLHLVTFLIAGVIIFSLAEPTLPGGSVWDGLVPDLLLVQSWLPEPTIIAGFNTPSWSLSCEFAFYLTFPLWYRLVRKIPVRRLWWCAAGIAAAVICVPFVTSQFPASAETAPGMPLNELWFACWLPPVRMLEFVLGIVMALILRTGVWRGPGVVSSALLLAAAYGVTQVVPPMFTIAACSIVPAALLITALANADVQGLRTGLRSAVLVRLGEWSFAFYLVHFMVIRYGHRLMGGELGYARQWSTASAGALALAMLAVAIVAGGLLHTVVENPCMRLLGRRRPVATAPDPATDEAPKLTRA.

Helical transmembrane passes span 8-28 (LPSL…CHIA), 45-65 (ITTL…FVLA), 85-105 (IYPL…SLAE), 139-161 (TPSW…YRLV), 170-190 (WWCA…TSQF), 209-229 (CWLP…ALIL), 236-256 (GPGV…TQVV), 258-278 (PMFT…TALA), 292-312 (AVLV…FMVI), and 336-356 (ALAL…HTVV).

This sequence belongs to the acyltransferase 3 family.

Its subcellular location is the cell membrane. Catalyzes the acylation of the mycaminose sugar during midecamycin biosynthesis. The protein is Acyltransferase MdmB (mdmB) of Streptomyces mycarofaciens.